Consider the following 695-residue polypeptide: DNA ligase (695 aa).

NAD(+) is bound by residues 39–43 (DAEYD), 88–89 (SL), and glutamate 124. Catalysis depends on lysine 126, which acts as the N6-AMP-lysine intermediate. Residues arginine 147, glutamate 183, lysine 299, and lysine 323 each coordinate NAD(+). The Zn(2+) site is built by cysteine 419, cysteine 422, cysteine 437, and cysteine 443. Residues 612–695 (PAQGHLSGKT…ELAGIGPVGP (84 aa)) enclose the BRCT domain.

Belongs to the NAD-dependent DNA ligase family. LigA subfamily. Mg(2+) serves as cofactor. Mn(2+) is required as a cofactor.

The catalysed reaction is NAD(+) + (deoxyribonucleotide)n-3'-hydroxyl + 5'-phospho-(deoxyribonucleotide)m = (deoxyribonucleotide)n+m + AMP + beta-nicotinamide D-nucleotide.. DNA ligase that catalyzes the formation of phosphodiester linkages between 5'-phosphoryl and 3'-hydroxyl groups in double-stranded DNA using NAD as a coenzyme and as the energy source for the reaction. It is essential for DNA replication and repair of damaged DNA. In Gluconacetobacter diazotrophicus (strain ATCC 49037 / DSM 5601 / CCUG 37298 / CIP 103539 / LMG 7603 / PAl5), this protein is DNA ligase.